We begin with the raw amino-acid sequence, 371 residues long: UDP-N-acetylglucosamine--N-acetylmuramyl-(pentapeptide) pyrophosphoryl-undecaprenol N-acetylglucosamine transferase (371 aa).

Residues 10 to 12 (TGG), asparagine 124, arginine 166, serine 196, and glutamine 301 each bind UDP-N-acetyl-alpha-D-glucosamine.

Belongs to the glycosyltransferase 28 family. MurG subfamily.

It is found in the cell membrane. It catalyses the reaction di-trans,octa-cis-undecaprenyl diphospho-N-acetyl-alpha-D-muramoyl-L-alanyl-D-glutamyl-meso-2,6-diaminopimeloyl-D-alanyl-D-alanine + UDP-N-acetyl-alpha-D-glucosamine = di-trans,octa-cis-undecaprenyl diphospho-[N-acetyl-alpha-D-glucosaminyl-(1-&gt;4)]-N-acetyl-alpha-D-muramoyl-L-alanyl-D-glutamyl-meso-2,6-diaminopimeloyl-D-alanyl-D-alanine + UDP + H(+). Its pathway is cell wall biogenesis; peptidoglycan biosynthesis. Functionally, cell wall formation. Catalyzes the transfer of a GlcNAc subunit on undecaprenyl-pyrophosphoryl-MurNAc-pentapeptide (lipid intermediate I) to form undecaprenyl-pyrophosphoryl-MurNAc-(pentapeptide)GlcNAc (lipid intermediate II). In Moorella thermoacetica (strain ATCC 39073 / JCM 9320), this protein is UDP-N-acetylglucosamine--N-acetylmuramyl-(pentapeptide) pyrophosphoryl-undecaprenol N-acetylglucosamine transferase.